The primary structure comprises 448 residues: N-succinylarginine dihydrolase (448 aa).

Residues 19-28 (GGLSYGNVAS), Asn110, and 137-138 (HR) contribute to the substrate site. Residue Glu174 is part of the active site. Arg214 is a binding site for substrate. Residue His250 is part of the active site. Asp252 and Asn365 together coordinate substrate. Residue Cys371 is the Nucleophile of the active site.

It belongs to the succinylarginine dihydrolase family. In terms of assembly, homodimer.

It carries out the reaction N(2)-succinyl-L-arginine + 2 H2O + 2 H(+) = N(2)-succinyl-L-ornithine + 2 NH4(+) + CO2. Its pathway is amino-acid degradation; L-arginine degradation via AST pathway; L-glutamate and succinate from L-arginine: step 2/5. Catalyzes the hydrolysis of N(2)-succinylarginine into N(2)-succinylornithine, ammonia and CO(2). The polypeptide is N-succinylarginine dihydrolase (Pseudomonas syringae pv. tomato (strain ATCC BAA-871 / DC3000)).